Consider the following 246-residue polypeptide: Probable 2-phosphosulfolactate phosphatase (246 aa).

This sequence belongs to the ComB family. It depends on Mg(2+) as a cofactor.

It carries out the reaction (2R)-O-phospho-3-sulfolactate + H2O = (2R)-3-sulfolactate + phosphate. This chain is Probable 2-phosphosulfolactate phosphatase, found in Nostoc punctiforme (strain ATCC 29133 / PCC 73102).